The sequence spans 75 residues: Cytochrome c oxidase subunit 6C (75 aa).

Topologically, residues 1–13 (MASEVLAKPQMRG) are mitochondrial matrix. A helical transmembrane segment spans residues 14–54 (LLARRLRIHMVGAFLISLGVAALYKFGVAEPRKKAYADFYK). At 55-75 (NYSPEKDFEEMKKAGVFRSIK) the chain is on the mitochondrial intermembrane side.

This sequence belongs to the cytochrome c oxidase subunit 6c family. Component of the cytochrome c oxidase (complex IV, CIV), a multisubunit enzyme composed of 14 subunits. The complex is composed of a catalytic core of 3 subunits MT-CO1, MT-CO2 and MT-CO3, encoded in the mitochondrial DNA, and 11 supernumerary subunits COX4I, COX5A, COX5B, COX6A, COX6B, COX6C, COX7A, COX7B, COX7C, COX8 and NDUFA4, which are encoded in the nuclear genome. The complex exists as a monomer or a dimer and forms supercomplexes (SCs) in the inner mitochondrial membrane with NADH-ubiquinone oxidoreductase (complex I, CI) and ubiquinol-cytochrome c oxidoreductase (cytochrome b-c1 complex, complex III, CIII), resulting in different assemblies (supercomplex SCI(1)III(2)IV(1) and megacomplex MCI(2)III(2)IV(2)).

It is found in the mitochondrion inner membrane. Its pathway is energy metabolism; oxidative phosphorylation. Component of the cytochrome c oxidase, the last enzyme in the mitochondrial electron transport chain which drives oxidative phosphorylation. The respiratory chain contains 3 multisubunit complexes succinate dehydrogenase (complex II, CII), ubiquinol-cytochrome c oxidoreductase (cytochrome b-c1 complex, complex III, CIII) and cytochrome c oxidase (complex IV, CIV), that cooperate to transfer electrons derived from NADH and succinate to molecular oxygen, creating an electrochemical gradient over the inner membrane that drives transmembrane transport and the ATP synthase. Cytochrome c oxidase is the component of the respiratory chain that catalyzes the reduction of oxygen to water. Electrons originating from reduced cytochrome c in the intermembrane space (IMS) are transferred via the dinuclear copper A center (CU(A)) of subunit 2 and heme A of subunit 1 to the active site in subunit 1, a binuclear center (BNC) formed by heme A3 and copper B (CU(B)). The BNC reduces molecular oxygen to 2 water molecules using 4 electrons from cytochrome c in the IMS and 4 protons from the mitochondrial matrix. This Saimiri sciureus (Common squirrel monkey) protein is Cytochrome c oxidase subunit 6C (COX6C).